The sequence spans 250 residues: Vacuolar protein sorting-associated protein 22 homolog 1 (250 aa).

The stretch at 35 to 55 forms a coiled coil; the sequence is MKEQLSTFRSQLEEFARKHKN.

The protein belongs to the SNF8 family. In terms of assembly, component of the endosomal sorting complex required for transport II (ESCRT-II), composed of VPS22, VPS25 and VPS36.

Its subcellular location is the endosome. Component of the endosomal sorting complex required for transport II (ESCRT-II), which is required for multivesicular body (MVB) formation and sorting of endosomal cargo proteins into MVBs. The ESCRT-II complex is probably involved in the recruitment of the ESCRT-III complex. This Arabidopsis thaliana (Mouse-ear cress) protein is Vacuolar protein sorting-associated protein 22 homolog 1 (VP22-1).